The primary structure comprises 108 residues: Mitochondrial pyruvate carrier 3 (108 aa).

The next 3 helical transmembrane spans lie at 19–35 (IHFW…IANI), 51–67 (IVIT…STVI), and 74–90 (LFSV…YQLT).

This sequence belongs to the mitochondrial pyruvate carrier (MPC) (TC 2.A.105) family. As to expression, abundant in leaf and particularly in the guard cells.

It localises to the mitochondrion. It is found in the mitochondrion inner membrane. Its function is as follows. Mediates the uptake of pyruvate into mitochondria. Negatively regulates ABA-induced guard cell signaling and mediates drought stress responses. The chain is Mitochondrial pyruvate carrier 3 from Arabidopsis thaliana (Mouse-ear cress).